A 74-amino-acid polypeptide reads, in one-letter code: Alpha-conotoxin GeXIVA (74 aa).

Residues 1–22 form the signal peptide; sequence MKLTCVLIITVLFLTACQLTTA. The propeptide occupies 23 to 46; it reads VTYSRGEHKHRALMSTGTNYRLPK. Residues 56–64 are interacts with alpha-9-alpha-10 (CHRNA9-CHRNA10) nAChR; the sequence is RSPYDRRRR.

It belongs to the conotoxin O1 superfamily. The native disulfide bond pairing has not been studied. Three isomers may exist: the bead isomer (I-II; III-IV), the globular isomer (I-III; II-IV), the ribbon isomer (I-IV; II-III). They have all been synthesized and their activity tested. All of them show similar potency on alpha-9-alpha-10 (CHRNA9-CHRNA10) nAChR, showing that disulfide bonds does not significantly affect their activity. In addition, removal of disulfide bonds does not affect the activity on alpha-9-alpha-10 (CHRNA9-CHRNA10) nAChR either. In terms of tissue distribution, expressed by the venom duct.

Its subcellular location is the secreted. Functionally, alpha-conotoxins act on postsynaptic membranes, they bind to the nicotinic acetylcholine receptors (nAChR) and thus inhibit them. This toxin is very potent on alpha-9-alpha-10/CHRNA9-CHRNA10 nAChR (IC(50)=4.61-12 nM for the bead isomer (I-II; III-IV), IC(50)=7-16 nM for the ribbon isomer (I-IV; II-III) and IC(50)=22.7 nM for the globular isomer (I-III; II-IV)). The bead isomer also shows a weak inhibition on other nAChRs (alpha-1-beta-1-delta-epsilon/CHRNA1-CHRNB1-CHRND-CHRNE, alpha-7/CHRNA7, alpha-6/alpha-3-beta-2-beta-3 (CHRNA6/CHRNA3-CHRNB2-CHRNB3), alpha-3-beta-2/CHRNA3-CHRNB2, alpha-2-beta-2/CHRNA2-CHRNB2, alpha-6/alpha-3-beta-4 (CHRNA6/CHRNA3-CHRNB4), alpha-4-beta-2/CHRNA4-CHRNB2, alpha-4-beta-4/CHRNA4-CHRNB4, alpha-2-beta-4/CHRNA2-CHRNB4, alpha-3-beta-4/CHRNA3-CHRNB4). The toxin blockade is voltage-dependent, and its binding site does not overlap with the binding site of the competitive antagonist alpha-conotoxin RgIA. The toxin inhibits Sf9 cell growth. Both the bead and ribbon isomers relieve pain effects in the rat chronic constriction injury (CCI) model of neuropathic pain, and in the acute pain model of tail flick test, but have no effect on motor performance. The chain is Alpha-conotoxin GeXIVA from Conus generalis (General cone).